Here is a 90-residue protein sequence, read N- to C-terminus: RNA-binding protein Hfq (90 aa).

The Sm domain occupies 9 to 69 (DRFLNHLRVN…ISTIIPSSYV (61 aa)).

Belongs to the Hfq family. In terms of assembly, homohexamer.

In terms of biological role, RNA chaperone that binds small regulatory RNA (sRNAs) and mRNAs to facilitate mRNA translational regulation in response to envelope stress, environmental stress and changes in metabolite concentrations. Also binds with high specificity to tRNAs. This chain is RNA-binding protein Hfq, found in Thermotoga petrophila (strain ATCC BAA-488 / DSM 13995 / JCM 10881 / RKU-1).